Here is a 276-residue protein sequence, read N- to C-terminus: 4-diphosphocytidyl-2-C-methyl-D-erythritol kinase (276 aa).

The active site involves Lys13. Pro94 to Ala104 lines the ATP pocket. The active site involves Asp131.

It belongs to the GHMP kinase family. IspE subfamily.

It catalyses the reaction 4-CDP-2-C-methyl-D-erythritol + ATP = 4-CDP-2-C-methyl-D-erythritol 2-phosphate + ADP + H(+). The protein operates within isoprenoid biosynthesis; isopentenyl diphosphate biosynthesis via DXP pathway; isopentenyl diphosphate from 1-deoxy-D-xylulose 5-phosphate: step 3/6. Functionally, catalyzes the phosphorylation of the position 2 hydroxy group of 4-diphosphocytidyl-2C-methyl-D-erythritol. In Jannaschia sp. (strain CCS1), this protein is 4-diphosphocytidyl-2-C-methyl-D-erythritol kinase.